The sequence spans 120 residues: Prefoldin subunit beta (120 aa).

Belongs to the prefoldin subunit beta family. Heterohexamer of two alpha and four beta subunits.

It localises to the cytoplasm. Functionally, molecular chaperone capable of stabilizing a range of proteins. Seems to fulfill an ATP-independent, HSP70-like function in archaeal de novo protein folding. The chain is Prefoldin subunit beta from Methanospirillum hungatei JF-1 (strain ATCC 27890 / DSM 864 / NBRC 100397 / JF-1).